Here is a 242-residue protein sequence, read N- to C-terminus: Small ribosomal subunit protein uS2 (242 aa).

Belongs to the universal ribosomal protein uS2 family.

The sequence is that of Small ribosomal subunit protein uS2 from Aeromonas hydrophila subsp. hydrophila (strain ATCC 7966 / DSM 30187 / BCRC 13018 / CCUG 14551 / JCM 1027 / KCTC 2358 / NCIMB 9240 / NCTC 8049).